Consider the following 433-residue polypeptide: Histidine--tRNA ligase (433 aa).

This sequence belongs to the class-II aminoacyl-tRNA synthetase family. Homodimer.

The protein localises to the cytoplasm. The enzyme catalyses tRNA(His) + L-histidine + ATP = L-histidyl-tRNA(His) + AMP + diphosphate + H(+). This Blochmanniella floridana protein is Histidine--tRNA ligase.